Reading from the N-terminus, the 1194-residue chain is Immunoglobulin superfamily member 3 (1194 aa).

Positions 1–19 (MKCFFPVLSCLAVLGVVSA) are cleaved as a signal peptide. 8 Ig-like C2-type domains span residues 20–138 (QRQV…AKMN), 143–262 (PDSL…WYAM), 276–386 (PTDK…KTVT), 401–539 (PIVV…VSIT), 545–661 (FAVT…WTRL), 676–803 (PVTK…EEVS), 813–945 (PDSR…TAVT), and 949–1097 (PDAA…YRLT). At 20-1124 (QRQVTVQEGP…LQSLICSNDA (1105 aa)) the chain is on the extracellular side. 2 cysteine pairs are disulfide-bonded: Cys42-Cys120 and Cys167-Cys246. Asn43 is a glycosylation site (N-linked (GlcNAc...) asparagine). Positions 250–252 (EWI) match the EWI motif motif. A disulfide bond links Cys302 and Cys376. N-linked (GlcNAc...) asparagine glycosylation is present at Asn418. 5 disulfides stabilise this stretch: Cys432/Cys511, Cys566/Cys645, Cys701/Cys782, Cys838/Cys918, and Cys974/Cys1080. Residue Asn842 is glycosylated (N-linked (GlcNAc...) asparagine). Residues 997–1030 (GGGKRGSLGIDEQEEEEEEEDISQEEDSEDPTER) form a disordered region. A compositionally biased stretch (acidic residues) spans 1007-1026 (DEQEEEEEEEDISQEEDSED). N-linked (GlcNAc...) asparagine glycosylation occurs at Asn1077. A helical transmembrane segment spans residues 1125–1145 (LFYFVFFYPFPIFGILIITIL). At 1146–1194 (LVRFKSRNSSKNSEGKNGVPLLWIKEPHLNYSPTCLEPPVLSIHPGAID) the chain is on the cytoplasmic side.

As to expression, expressed in the lacrimal duct and lacrimal gland.

The protein resides in the membrane. This chain is Immunoglobulin superfamily member 3 (Igsf3), found in Mus musculus (Mouse).